Here is a 409-residue protein sequence, read N- to C-terminus: Beta-arrestin-2 (409 aa).

Tyr-48 is modified (phosphotyrosine). A hydroxyproline; by PHD2 mark is found at Pro-176 and Pro-181. The interval 240 to 409 (ADICLFSTAQ…KDDDYDDQLC (170 aa)) is interaction with TRAF6. Ser-360 carries the phosphoserine modification. The segment at 363 to 409 (PETDVPVDTNLIEFDTNYATDDDIVFEDFARLRLKGMKDDDYDDQLC) is interaction with AP2B1. Thr-382 bears the Phosphothreonine mark. A [DE]-X(1,2)-F-X-X-[FL]-X-X-X-R motif motif is present at residues 385–395 (DIVFEDFARLR).

It belongs to the arrestin family. In terms of assembly, homooligomer; the self-association is mediated by InsP6-binding. Heterooligomer with ARRB1; the association is mediated by InsP6-binding. Interacts with ADRB2 and CHRM2. Interacts with PDE4A. Interacts with PDE4D. Interacts with MAPK10, MAPK1 and MAPK3. Interacts with DRD2. Interacts with FSHR. Interacts with CLTC. Interacts with HTR2C. Interacts with CCR5. Interacts with CXCR4. Interacts with SRC. Interacts with DUSP16; the interaction is interrupted by stimulation of AGTR1 and activation of MAPK10. Interacts with CHUK; the interaction is enhanced stimulation of ADRB2. Interacts with RELA. Interacts with MDM2; the interaction is enhanced by activation of GPCRs. Interacts with SLC9A5. Interacts with TRAF6. Interacts with IGF1R. Interacts with ENG. Interacts with KIR2DL1, KIR2DL3 and KIR2DL4. Interacts with LDLR. Interacts with AP2B1. Interacts with C5AR1. Interacts with RAF1. Interacts with MAP2K1. Interacts with MAPK1. Interacts with MAPK10; the interaction enhances MAPK10 activation by MAP3K5. Interacts with MAP2K4; the interaction is enhanced by presence of MAP3K5 and MAPK10. Interacts with MAP3K5. Interacts with AKT1. Interacts with IKBKB and MAP3K14. Interacts with SMO (activated). Interacts with GSK3A and GSK3B. Associates with protein phosphatase 2A (PP2A). Interacts with DHX8; the interaction is detected in the nucleus upon OR1D2 stimulation. Interacts with GAPDHS; the interaction is detected in the nucleus upon OR1D2 stimulation. Interacts with H2AFX; the interaction is detected in the nucleus upon OR1D2 stimulation. Interacts with KIF14; the interaction is detected in the nucleus upon OR1D2 stimulation. Interacts with RCC1; the interaction is detected in the nucleus upon OR1D2 stimulation. Interacts with CXCR4; the interaction is dependent on C-terminal phosphorylation of CXCR4 and allows activation of MAPK1 and MAPK3. Interacts with GPR143. Interacts with HCK and CXCR1 (phosphorylated). Interacts with ACKR3 and ACKR4. Interacts with ARRDC1; the interaction is direct. Interacts with GPR61, GPR62 and GPR135. Interacts (via NACHT and LRR domains) with NLRP3; this interaction is direct and inducible by omega-3 polyunsaturated fatty acids (PUFAs). Interacts with FFAR4 (via C-terminus); this interaction is stimulated by long-chain fatty acids (LCFAs). Interacts with GPR35. Interacts with GPR84. Interacts with TIGIT; this interaction inhibits the NF-kappa-B pathway. Interacts with TGFBR3. Phosphorylated at Thr-382 in the cytoplasm; probably dephosphorylated at the plasma membrane. The phosphorylation does not regulate internalization and recycling of ADRB2, interaction with clathrin or AP2B1. In terms of processing, the ubiquitination status appears to regulate the formation and trafficking of beta-arrestin-GPCR complexes and signaling. Ubiquitination appears to occur GPCR-specific. Ubiquitinated by MDM2; the ubiquitination is required for rapid internalization of ADRB2. Deubiquitinated by USP33; the deubiquitination leads to a dissociation of the beta-arrestin-GPCR complex. Stimulation of a class A GPCR, such as ADRB2, induces transient ubiquitination and subsequently promotes association with USP33. Stimulation of a class B GPCR promotes a sustained ubiquitination. Deubiquitinated by USP20; allowing USP20 to deubiquitinate TRAF6 leading to inhibition of NF-kappa-B signaling. Post-translationally, hydroxylation by PHD2 modulates the rate of internalization by slowing down recruitment to the plasma membrane and inhibiting subsequent co-internalization with class A receptors.

It is found in the cytoplasm. It localises to the nucleus. Its subcellular location is the cell membrane. The protein resides in the membrane. The protein localises to the clathrin-coated pit. It is found in the cytoplasmic vesicle. Functionally, functions in regulating agonist-mediated G-protein coupled receptor (GPCR) signaling by mediating both receptor desensitization and resensitization processes. During homologous desensitization, beta-arrestins bind to the GPRK-phosphorylated receptor and sterically preclude its coupling to the cognate G-protein; the binding appears to require additional receptor determinants exposed only in the active receptor conformation. The beta-arrestins target many receptors for internalization by acting as endocytic adapters (CLASPs, clathrin-associated sorting proteins) and recruiting the GPRCs to the adapter protein 2 complex 2 (AP-2) in clathrin-coated pits (CCPs). However, the extent of beta-arrestin involvement appears to vary significantly depending on the receptor, agonist and cell type. Internalized arrestin-receptor complexes traffic to intracellular endosomes, where they remain uncoupled from G-proteins. Two different modes of arrestin-mediated internalization occur. Class A receptors, like ADRB2, OPRM1, ENDRA, D1AR and ADRA1B dissociate from beta-arrestin at or near the plasma membrane and undergo rapid recycling. Class B receptors, like AVPR2, AGTR1, NTSR1, TRHR and TACR1 internalize as a complex with arrestin and traffic with it to endosomal vesicles, presumably as desensitized receptors, for extended periods of time. Receptor resensitization then requires that receptor-bound arrestin is removed so that the receptor can be dephosphorylated and returned to the plasma membrane. Mediates endocytosis of CCR7 following ligation of CCL19 but not CCL21. Involved in internalization of P2RY1, P2RY4, P2RY6 and P2RY11 and ATP-stimulated internalization of P2RY2. Involved in phosphorylation-dependent internalization of OPRD1 and subsequent recycling or degradation. Involved in ubiquitination of IGF1R. Beta-arrestins function as multivalent adapter proteins that can switch the GPCR from a G-protein signaling mode that transmits short-lived signals from the plasma membrane via small molecule second messengers and ion channels to a beta-arrestin signaling mode that transmits a distinct set of signals that are initiated as the receptor internalizes and transits the intracellular compartment. Acts as a signaling scaffold for MAPK pathways such as MAPK1/3 (ERK1/2) and MAPK10 (JNK3). ERK1/2 and JNK3 activated by the beta-arrestin scaffold are largely excluded from the nucleus and confined to cytoplasmic locations such as endocytic vesicles, also called beta-arrestin signalosomes. Acts as a signaling scaffold for the AKT1 pathway. GPCRs for which the beta-arrestin-mediated signaling relies on both ARRB1 and ARRB2 (codependent regulation) include ADRB2, F2RL1 and PTH1R. For some GPCRs the beta-arrestin-mediated signaling relies on either ARRB1 or ARRB2 and is inhibited by the other respective beta-arrestin form (reciprocal regulation). Increases ERK1/2 signaling in AGTR1- and AVPR2-mediated activation (reciprocal regulation). Involved in CCR7-mediated ERK1/2 signaling involving ligand CCL19. Is involved in type-1A angiotensin II receptor/AGTR1-mediated ERK activity. Is involved in type-1A angiotensin II receptor/AGTR1-mediated MAPK10 activity. Is involved in dopamine-stimulated AKT1 activity in the striatum by disrupting the association of AKT1 with its negative regulator PP2A. Involved in AGTR1-mediated chemotaxis. Appears to function as signaling scaffold involved in regulation of MIP-1-beta-stimulated CCR5-dependent chemotaxis. Involved in attenuation of NF-kappa-B-dependent transcription in response to GPCR or cytokine stimulation by interacting with and stabilizing CHUK. Suppresses UV-induced NF-kappa-B-dependent activation by interacting with CHUK. The function is promoted by stimulation of ADRB2 and dephosphorylation of ARRB2. Involved in p53/TP53-mediated apoptosis by regulating MDM2 and reducing the MDM2-mediated degradation of p53/TP53. May serve as nuclear messenger for GPCRs. Upon stimulation of OR1D2, may be involved in regulation of gene expression during the early processes of fertilization. Also involved in regulation of receptors other than GPCRs. Involved in endocytosis of TGFBR2 and TGFBR3 and down-regulates TGF-beta signaling such as NF-kappa-B activation. Involved in endocytosis of low-density lipoprotein receptor/LDLR. Involved in endocytosis of smoothened homolog/Smo, which also requires GRK2. Involved in endocytosis of SLC9A5. Involved in endocytosis of ENG and subsequent TGF-beta-mediated ERK activation and migration of epithelial cells. Involved in Toll-like receptor and IL-1 receptor signaling through the interaction with TRAF6 which prevents TRAF6 autoubiquitination and oligomerization required for activation of NF-kappa-B and JUN. Involved in insulin resistance by acting as insulin-induced signaling scaffold for SRC, AKT1 and INSR. Involved in regulation of inhibitory signaling of natural killer cells by recruiting PTPN6 and PTPN11 to KIR2DL1. Involved in IL8-mediated granule release in neutrophils. Involved in the internalization of the atypical chemokine receptor ACKR3. Acts as an adapter protein coupling FFAR4 receptor to specific downstream signaling pathways, as well as mediating receptor endocytosis. During the activation step of NLRP3 inflammasome, directly associates with NLRP3 leading to inhibition of pro-inflammatory cytokine release and inhibition of inflammation. The polypeptide is Beta-arrestin-2 (ARRB2) (Homo sapiens (Human)).